We begin with the raw amino-acid sequence, 194 residues long: Naphthalene 1,2-dioxygenase system, small oxygenase component (194 aa).

Belongs to the bacterial ring-hydroxylating dioxygenase beta subunit family. The naphthalene dioxygenase (NDO) multicomponent enzyme system is composed of an electron transfer component and a dioxygenase component (iron sulfur protein (ISP)). The electron transfer component is composed of a ferredoxin reductase (NdoR) and a ferredoxin (NdoA), and the dioxygenase component is formed of a heterohexamer (trimer of heterodimers) of three large alpha subunits (NdoB) and three small beta subunits (NdoC).

Its pathway is aromatic compound metabolism; naphthalene degradation. Its function is as follows. Component of the naphthalene dioxygenase (NDO) multicomponent enzyme system which catalyzes the incorporation of both atoms of molecular oxygen into naphthalene to form cis-(1R,2S)-dihydroxy-1,2-dihydronaphthalene. The beta subunit seems to have a structural role in the holoenzyme. Also able to catalyze the cis-dihydroxylation of biphenyl and phenanthrene. This Pseudomonas putida (Arthrobacter siderocapsulatus) protein is Naphthalene 1,2-dioxygenase system, small oxygenase component.